Here is a 216-residue protein sequence, read N- to C-terminus: Transmembrane protein 186 (216 aa).

Topologically, residues 1-68 are mitochondrial matrix; it reads MAFLLRAVPR…IYRFNAIRAL (68 aa). A helical transmembrane segment spans residues 69–91; it reads GFLSRLKLAQTAVTVVALPPGFY. Residues 92 to 103 lie on the Mitochondrial intermembrane side of the membrane; that stretch reads CYSQGLMTLSSL. A helical membrane pass occupies residues 104–124; the sequence is GLMSGIASFALVMLCWMSHFF. Residues 125 to 216 are Mitochondrial matrix-facing; that stretch reads RRLVGILYVN…GTLATLKNSK (92 aa).

This sequence belongs to the TMEM186 family. As to quaternary structure, part of the mitochondrial complex I assembly/MCIA complex that comprises at least the core subunits TMEM126B, NDUFAF1, ECSIT and ACAD9 and complement subunits such as COA1 and TMEM186. Interacts with MT-ND3.

It is found in the mitochondrion inner membrane. Functionally, as part of the MCIA complex, required for efficient assembly of the mitochondrial complex I. This Rattus norvegicus (Rat) protein is Transmembrane protein 186.